Consider the following 123-residue polypeptide: Glycine cleavage system H protein (123 aa).

One can recognise a Lipoyl-binding domain in the interval 23-104 (HWLAGITDHA…PYDAWIFSFE (82 aa)). Position 64 is an N6-lipoyllysine (K64).

This sequence belongs to the GcvH family. In terms of assembly, the glycine cleavage system is composed of four proteins: P, T, L and H. (R)-lipoate is required as a cofactor.

In terms of biological role, the glycine cleavage system catalyzes the degradation of glycine. The H protein shuttles the methylamine group of glycine from the P protein to the T protein. The polypeptide is Glycine cleavage system H protein (Methylobacillus flagellatus (strain ATCC 51484 / DSM 6875 / VKM B-1610 / KT)).